Reading from the N-terminus, the 197-residue chain is Molybdenum cofactor guanylyltransferase (197 aa).

Residues 12–14 (LAG), Lys25, Asn53, Asp71, and Asp101 contribute to the GTP site. A Mg(2+)-binding site is contributed by Asp101.

It belongs to the MobA family. In terms of assembly, monomer. Requires Mg(2+) as cofactor.

The protein localises to the cytoplasm. The catalysed reaction is Mo-molybdopterin + GTP + H(+) = Mo-molybdopterin guanine dinucleotide + diphosphate. Transfers a GMP moiety from GTP to Mo-molybdopterin (Mo-MPT) cofactor (Moco or molybdenum cofactor) to form Mo-molybdopterin guanine dinucleotide (Mo-MGD) cofactor. This is Molybdenum cofactor guanylyltransferase from Bordetella pertussis (strain Tohama I / ATCC BAA-589 / NCTC 13251).